The sequence spans 691 residues: Elongation factor G (691 aa).

The tr-type G domain occupies 8-282; the sequence is ERVRNIGIAA…AVVDYLPAPV (275 aa). Residues 17–24, 81–85, and 135–138 contribute to the GTP site; these read AHIDAGKT, DTPGH, and NKMD.

Belongs to the TRAFAC class translation factor GTPase superfamily. Classic translation factor GTPase family. EF-G/EF-2 subfamily.

Its subcellular location is the cytoplasm. In terms of biological role, catalyzes the GTP-dependent ribosomal translocation step during translation elongation. During this step, the ribosome changes from the pre-translocational (PRE) to the post-translocational (POST) state as the newly formed A-site-bound peptidyl-tRNA and P-site-bound deacylated tRNA move to the P and E sites, respectively. Catalyzes the coordinated movement of the two tRNA molecules, the mRNA and conformational changes in the ribosome. The polypeptide is Elongation factor G (Prochlorococcus marinus (strain MIT 9312)).